We begin with the raw amino-acid sequence, 362 residues long: Oxygen-dependent coproporphyrinogen-III oxidase (362 aa).

A substrate-binding site is contributed by Ser118. 2 residues coordinate a divalent metal cation: His122 and His132. His132 functions as the Proton donor in the catalytic mechanism. Position 134 to 136 (134 to 136) interacts with substrate; that stretch reads NYR. Residues His166 and His196 each coordinate a divalent metal cation. The segment at 286–321 is important for dimerization; the sequence is YVEFNLVWDRGTIFGLQTNGRTESILMSLPPLVRWE.

This sequence belongs to the aerobic coproporphyrinogen-III oxidase family. As to quaternary structure, homodimer. The cofactor is a divalent metal cation.

It localises to the cytoplasm. It catalyses the reaction coproporphyrinogen III + O2 + 2 H(+) = protoporphyrinogen IX + 2 CO2 + 2 H2O. The protein operates within porphyrin-containing compound metabolism; protoporphyrin-IX biosynthesis; protoporphyrinogen-IX from coproporphyrinogen-III (O2 route): step 1/1. Involved in the heme and chlorophyll biosynthesis. Catalyzes the aerobic oxidative decarboxylation of propionate groups of rings A and B of coproporphyrinogen-III to yield the vinyl groups in protoporphyrinogen-IX. This Synechococcus sp. (strain CC9605) protein is Oxygen-dependent coproporphyrinogen-III oxidase.